The chain runs to 364 residues: Caffeic acid 3-O-methyltransferase 3 (364 aa).

129–135 (MNQDKVL) serves as a coordination point for substrate. The tract at residues 161-179 (AFEYHGTDPRFNKVFNKGM) is substrate binding. Residues Gly-207, Asp-230, Asp-250, Met-251, and Lys-264 each contribute to the S-adenosyl-L-methionine site. His-268 functions as the Proton acceptor in the catalytic mechanism.

This sequence belongs to the class I-like SAM-binding methyltransferase superfamily. Cation-independent O-methyltransferase family. COMT subfamily. Homodimer.

It catalyses the reaction (E)-caffeate + S-adenosyl-L-methionine = (E)-ferulate + S-adenosyl-L-homocysteine + H(+). The protein operates within aromatic compound metabolism; phenylpropanoid biosynthesis. In terms of biological role, catalyzes the conversion of caffeic acid to ferulic acid and of 5-hydroxyferulic acid to sinapic acid. The resulting products may subsequently be converted to the corresponding alcohols that are incorporated into lignins. This is Caffeic acid 3-O-methyltransferase 3 (HOMT3) from Populus kitakamiensis (Aspen).